The primary structure comprises 814 residues: Microbial collagenase (814 aa).

Residues 1–21 (MELKILSVAIATTLTSTGVFA) form the signal peptide. The propeptide occupies 22–75 (LSEPVSQVTEQHAHSAHTHGVEFNRVEYQPTATLPIQPSKATRVQSLESLDESS). H477 is a binding site for Zn(2+). Residue E478 is part of the active site. H481 serves as a coordination point for Zn(2+). One can recognise a PKD domain in the interval 609 to 697 (APNAVITANS…VVISALGGND (89 aa)).

This sequence belongs to the peptidase M9A family. Requires Zn(2+) as cofactor. In terms of processing, proteolytic cleavage might yield three different active forms.

The protein localises to the secreted. It catalyses the reaction Digestion of native collagen in the triple helical region at Xaa-|-Gly bonds. With synthetic peptides, a preference is shown for Gly at P3 and P1', Pro and Ala at P2 and P2', and hydroxyproline, Ala or Arg at P3'.. This is Microbial collagenase from Vibrio alginolyticus.